Consider the following 309-residue polypeptide: Hydroxyacylglutathione hydrolase, mitochondrial (309 aa).

Residues 1-24 constitute a mitochondrion transit peptide; the sequence is MVLGRGSLCLRSLSVLGAACARRG. Lys90 bears the N6-acetyllysine mark. Positions 103, 105, 107, and 108 each coordinate Zn(2+). The residue at position 117 (Lys117) is an N6-acetyllysine. Zn(2+)-binding residues include His159 and Asp183. Substrate is bound by residues 192–194 and 222–224; these read KFY and HEY. His222 serves as a coordination point for Zn(2+). The residue at position 230 (Lys230) is an N6-acetyllysine; alternate. An N6-succinyllysine; alternate modification is found at Lys230. 298–301 serves as a coordination point for substrate; the sequence is RREK.

It belongs to the metallo-beta-lactamase superfamily. Glyoxalase II family. As to quaternary structure, monomer. Zn(2+) serves as cofactor. As to expression, strongly expressed in testis, skeletal muscle and heart. Weakly expressed in placenta, pancreas, spleen and peripheral blood leukocytes.

The protein localises to the mitochondrion matrix. It is found in the cytoplasm. The catalysed reaction is an S-(2-hydroxyacyl)glutathione + H2O = a 2-hydroxy carboxylate + glutathione + H(+). It catalyses the reaction (R)-S-lactoylglutathione + H2O = (R)-lactate + glutathione + H(+). Its pathway is secondary metabolite metabolism; methylglyoxal degradation; (R)-lactate from methylglyoxal: step 2/2. Its function is as follows. Thiolesterase that catalyzes the hydrolysis of S-D-lactoyl-glutathione to form glutathione and D-lactic acid. This is Hydroxyacylglutathione hydrolase, mitochondrial (Hagh) from Rattus norvegicus (Rat).